A 90-amino-acid chain; its full sequence is Probable Fe(2+)-trafficking protein (90 aa).

Belongs to the Fe(2+)-trafficking protein family.

Functionally, could be a mediator in iron transactions between iron acquisition and iron-requiring processes, such as synthesis and/or repair of Fe-S clusters in biosynthetic enzymes. This Chromobacterium violaceum (strain ATCC 12472 / DSM 30191 / JCM 1249 / CCUG 213 / NBRC 12614 / NCIMB 9131 / NCTC 9757 / MK) protein is Probable Fe(2+)-trafficking protein.